A 244-amino-acid polypeptide reads, in one-letter code: 5-oxoprolinase subunit A (244 aa).

This sequence belongs to the LamB/PxpA family. Forms a complex composed of PxpA, PxpB and PxpC.

It carries out the reaction 5-oxo-L-proline + ATP + 2 H2O = L-glutamate + ADP + phosphate + H(+). In terms of biological role, catalyzes the cleavage of 5-oxoproline to form L-glutamate coupled to the hydrolysis of ATP to ADP and inorganic phosphate. This is 5-oxoprolinase subunit A from Escherichia coli O139:H28 (strain E24377A / ETEC).